The sequence spans 912 residues: MVTCVPASEQIGCAERDSQIYSEDTGGTEAVRVTDCRSPEDSGPQNEPGYCNSEDSGQLMASYEGKARGYQVPPFGWRICLAHEFAEKRKPFQANNVSLSNLVKHFGMGLRYLKWWYRKTQVEKKTPFIDMFNSVPLRQIYGCPLGGIGGGTITRGWRGQFCRWQLNPGMYQHQTVIADQFIVCLRRDGRTVYQQVLSLELPSVLRSWNWGLCGYFAFYHALYPRAWTVYQLPGQNVTLTCRQITPILPHDYQDSSLPVGVFVWDVENEGDETLDVSIMFSMRNGLGGEDDAAGGLWNEPFRLEQDGTTVQGLLLHHPTPPNPYTMAVAARHTADTTVTYTTAFDPDSTGQQVWQDLLQDGQLDSPAGQSTPTQRGEGVAGAVCASSKLLPRGRCCLEFSLAWDMPRIMFGAKGQVHYRRYTRFFGSDGDVAPALSHYALCQYAGWENSISAWQNPVLDDRSLPAWYKSALFNELYFLADGGTVWLEVPEDSLPEELGGSMYQLRPILQDYGRFGYLEGQEYRMYNTYDVHFYASFALVMLWPKLELSLQYDMALATFKEDLTRRRYLMSGVVAPVKRRNVIPHDIGDPDDEPWLRVNAYLIHDTADWKDLNLKFVLQVYRDYYLTGDQGFLKDMWPVCLAVMESEMKFDKDQDGLIENGGYADQTYDGWVTTGPSAYCGGLWLAAVAVMVQMAVLCGAQDVQDKFSSILCRGREAYERLLWNGRYYNYDSSSQPQSRSVMSDQCAGQWFLRACGLGEGDTEVFPTLHVVRALKTIFELNVQAFAGGAMGAVNGMQPHGVPDRSSVQSDEVWVGVVYGLAATMIQEGLTWEGFRTAEGCYRTVWERLGLAFQTPEAYCQQRVFRSLAYMRPLSIWAMQLALQQQQHKKNSSRPAVTQGTAPSQPECGPKRSL.

Residues 886 to 912 form a disordered region; the sequence is HKKNSSRPAVTQGTAPSQPECGPKRSL. Positions 891–902 are enriched in polar residues; that stretch reads SRPAVTQGTAPS.

Belongs to the non-lysosomal glucosylceramidase family.

The protein localises to the endoplasmic reticulum membrane. It localises to the golgi apparatus membrane. The enzyme catalyses a beta-D-glucosyl-(1&lt;-&gt;1')-N-acylsphing-4-enine + H2O = an N-acylsphing-4-enine + D-glucose. It carries out the reaction a beta-D-galactosyl-(1&lt;-&gt;1')-N-acylsphing-4-enine + H2O = an N-acylsphing-4-enine + D-galactose. It catalyses the reaction beta-D-glucosyl-(1-&gt;3)-O-lithocholate + H2O = lithocholate + D-glucose. The catalysed reaction is beta-D-glucosyl-(1-&gt;3)-O-chenodeoxycholate + H2O = chenodeoxycholate + D-glucose. The enzyme catalyses a di-trans,poly-cis-dolichyl beta-D-glucosyl phosphate + chenodeoxycholate = beta-D-glucosyl-(1-&gt;3)-O-chenodeoxycholate + a di-trans,poly-cis-dolichyl phosphate + H(+). It carries out the reaction octyl beta-D-glucose + chenodeoxycholate = beta-D-glucosyl-(1-&gt;3)-O-chenodeoxycholate + octan-1-ol. It catalyses the reaction cholesteryl 3-beta-D-glucoside + H2O = cholesterol + D-glucose. The catalysed reaction is a beta-D-glucosyl-(1&lt;-&gt;1')-N-acylsphing-4-enine + cholesterol = cholesteryl 3-beta-D-glucoside + an N-acylsphing-4-enine. The enzyme catalyses beta-D-glucosyl-N-(9Z-octadecenoyl)-sphing-4E-enine + cholesterol = N-(9Z-octadecenoyl)-sphing-4-enine + cholesteryl 3-beta-D-glucoside. It carries out the reaction a beta-D-galactosyl-(1&lt;-&gt;1')-N-acylsphing-4-enine + cholesterol = cholesteryl 3-beta-D-galactoside + an N-acylsphing-4-enine. It catalyses the reaction 1-(beta-D-galactosyl)-N-dodecanoylsphing-4-enine + cholesterol = cholesteryl 3-beta-D-galactoside + N-dodecanoylsphing-4-enine. The protein operates within lipid metabolism; sphingolipid metabolism. It participates in steroid metabolism; cholesterol metabolism. Its activity is regulated as follows. Enzymatic activity is dependent on membrane association and requires the presence of lipids. Non-lysosomal glucosylceramidase that catalyzes the hydrolysis of glucosylceramides/GlcCers (such as beta-D-glucosyl-(1&lt;-&gt;1')-N-acylsphing-4-enine) to free glucose and ceramides (such as N-acylsphing-4-enine). GlcCers are membrane glycosphingolipids that have a wide intracellular distribution. They are the main precursors of more complex glycosphingolipids that play a role in cellular growth, differentiation, adhesion, signaling, cytoskeletal dynamics and membrane properties. Involved in the transglucosylation of cholesterol, transfers glucose from GlcCer to cholesterol, thereby modifying its water solubility and biological properties. Under specific conditions, may catalyze the reverse reaction, transferring glucose from cholesteryl-3-beta-D-glucoside to ceramide (such as N-acylsphing-4-enine). May play a role in the metabolism of bile acids. Able to hydrolyze bile acid 3-O-glucosides as well as to produce bile acid-glucose conjugates thanks to a bile acid glucosyl transferase activity. Catalyzes the hydrolysis of galactosylceramides/GalCers (such as beta-D-galactosyl-(1&lt;-&gt;1')-N-acylsphing-4-enine), as well as the galactosyl transfer between GalCers and cholesterol in vitro with lower activity compared with their activity against GlcCers. The chain is Non-lysosomal glucosylceramidase from Rattus norvegicus (Rat).